A 157-amino-acid chain; its full sequence is S-ribosylhomocysteine lyase (157 aa).

3 residues coordinate Fe cation: H54, H58, and C124.

This sequence belongs to the LuxS family. In terms of assembly, homodimer. Requires Fe cation as cofactor.

The catalysed reaction is S-(5-deoxy-D-ribos-5-yl)-L-homocysteine = (S)-4,5-dihydroxypentane-2,3-dione + L-homocysteine. Involved in the synthesis of autoinducer 2 (AI-2) which is secreted by bacteria and is used to communicate both the cell density and the metabolic potential of the environment. The regulation of gene expression in response to changes in cell density is called quorum sensing. Catalyzes the transformation of S-ribosylhomocysteine (RHC) to homocysteine (HC) and 4,5-dihydroxy-2,3-pentadione (DPD). The sequence is that of S-ribosylhomocysteine lyase from Oenococcus oeni (strain ATCC BAA-331 / PSU-1).